The following is a 589-amino-acid chain: DNA ligase (589 aa).

Residue E250 participates in ATP binding. Residue K252 is the N6-AMP-lysine intermediate of the active site. Residues R257, R272, E302, F342, R417, and K423 each coordinate ATP.

It belongs to the ATP-dependent DNA ligase family. The cofactor is Mg(2+).

The catalysed reaction is ATP + (deoxyribonucleotide)n-3'-hydroxyl + 5'-phospho-(deoxyribonucleotide)m = (deoxyribonucleotide)n+m + AMP + diphosphate.. Functionally, DNA ligase that seals nicks in double-stranded DNA during DNA replication, DNA recombination and DNA repair. This Cenarchaeum symbiosum (strain A) protein is DNA ligase.